The chain runs to 163 residues: IQSTSMDQGILTEDSMNSFIRTLIQAGIWKNKVPKQMARTKDGTQTTVKKSEAEADATASQDTRLGFQPIVSVDAELLRQQRRFSSPRVLLSENTPLEPPPLYLTEEPVALNRTSRRKREGKSHRGEYSVCDSESRWVTDKSSAVDIRGHQVTVLGEIRMGPS.

Residues 1 to 3 (IQS) form the signal peptide. A propeptide spanning residues 4-119 (TSMDQGILTE…ALNRTSRRKR (116 aa)) is cleaved from the precursor. Disordered regions lie at residues 38–60 (ARTK…ATAS) and 90–131 (LLSE…YSVC). Residue Asn-112 is glycosylated (N-linked (GlcNAc...) asparagine).

The protein belongs to the NGF-beta family.

It localises to the secreted. Functionally, seems to promote the survival of visceral and proprioceptive sensory neurons. This is Neurotrophin-3 (NTF3) from Eunectes notaeus (Yellow anaconda).